The following is a 679-amino-acid chain: Stress-70 protein, mitochondrial (679 aa).

The N-terminal 46 residues, 1–46, are a transit peptide targeting the mitochondrion; it reads MISASRAVAARLVGAAASRGPTAARHQDGWNGLSHEAFRIVSRRDY. The segment at 1–432 is interaction with NFS1; the sequence is MISASRAVAA…IQGGVLAGDV (432 aa). ADP is bound by residues T63 and N64. Residues 63–431 form a nucleotide-binding domain (NBD) region; it reads TNSCVAVMEG…AIQGGVLAGD (369 aa). An N6-acetyllysine modification is found at K76. T87 is subject to Phosphothreonine. 2 positions are modified to N6-acetyllysine; alternate: K135 and K138. N6-succinyllysine; alternate is present on residues K135 and K138. K143 is modified (N6-acetyllysine). Position 206 is an N6-acetyllysine; alternate (K206). Position 206 is an N6-succinyllysine; alternate (K206). K206 carries the N6-malonyllysine; alternate modification. Residues K234 and K288 each carry the N6-acetyllysine modification. Residue K300 is modified to N6-acetyllysine; alternate. Position 300 is an N6-succinyllysine; alternate (K300). Residues E313, K316, and S320 each contribute to the ADP site. K368 carries the N6-succinyllysine modification. G388 and R391 together coordinate ADP. K394 carries the N6-succinyllysine modification. The residue at position 408 (S408) is a Phosphoserine. The tract at residues 432-441 is interdomain linker; it reads VTDVLLLDVT. The interaction with FXN and ISCU stretch occupies residues 432–679; sequence VTDVLLLDVT…QKEDQKEEKQ (248 aa). The substrate-binding domain (SBD) stretch occupies residues 442 to 679; that stretch reads PLSLGIETLG…QKEDQKEEKQ (238 aa). R513 is subject to Omega-N-methylarginine. N6-acetyllysine; alternate is present on residues K567 and K600. 2 positions are modified to N6-succinyllysine; alternate: K567 and K600. K610 carries the N6-succinyllysine modification. K612 is subject to N6-acetyllysine. An N6-acetyllysine; alternate modification is found at K646. K646 carries the N6-succinyllysine; alternate modification. A disordered region spans residues 656–679; sequence ASEREGSGSSGTGEQKEDQKEEKQ. A compositionally biased stretch (basic and acidic residues) spans 669-679; that stretch reads EQKEDQKEEKQ.

The protein belongs to the heat shock protein 70 family. Interacts strongly with the intermediate form of FXN and weakly with its mature form. Interacts with HSCB. Associates with the mitochondrial contact site and cristae organizing system (MICOS) complex, composed of at least MICOS10/MIC10, CHCHD3/MIC19, CHCHD6/MIC25, APOOL/MIC27, IMMT/MIC60, APOO/MIC23/MIC26 and QIL1/MIC13. This complex was also known under the names MINOS or MitOS complex. The MICOS complex associates with mitochondrial outer membrane proteins SAMM50, MTX1, MTX2 and DNAJC11, mitochondrial inner membrane protein TMEM11 and with HSPA9. Interacts with DNLZ, the interaction is required to prevent self-aggregation. Interacts with TESPA1. Interacts with PDPN. Interacts with NFU1, NFS1 and ISCU. Interacts with TP53; the interaction promotes TP53 degradation. Interacts (via SBD domain) with UBXN2A; the interaction with UBXN2A inhibits HSPA9/MOT-2 interaction with and degradation of TP53, thereby promotes TP53 translocation to the nucleus. Interacts with ITPR1 AND VDAC1; this interaction couples ITPR1 to VDAC1. Component of the TIM23 mitochondrial inner membrane pre-sequence translocase complex.

It is found in the mitochondrion. Its subcellular location is the nucleus. It localises to the nucleolus. The protein localises to the cytoplasm. The protein resides in the mitochondrion matrix. The enzyme catalyses ATP + H2O = ADP + phosphate + H(+). The chaperone activity is regulated by ATP-induced allosteric coupling of the nucleotide-binding (NBD) and substrate-binding (SBD) domains. ATP binding in the nucleotide-binding pocket (NBP) leads to a conformational change in the NBD, which is transferred through the interdomain linker (IDL) to the substrate-binding domain (SBD). This elicits a reduced substrate affinity and a faster substrate exchange rate. Upon hydrolysis of ATP to ADP, the protein undergoes a conformational change that increases its affinity for substrate proteins. It cycles through repeated phases of ATP hydrolysis and nucleotide exchange, facilitating repeated cycles of substrate binding and release. Functions in collaboration with co-chaperones. Functions with the co-chaperone, DNLZ, to maintain solubility and regulate ATP hydrolysis. Nucleotide exchange factors, GRPEL1 and GRPEL2, accelerate nucleotide exchange. Its function is as follows. Mitochondrial chaperone that plays a key role in mitochondrial protein import, folding, and assembly. Plays an essential role in the protein quality control system, the correct folding of proteins, the re-folding of misfolded proteins, and the targeting of proteins for subsequent degradation. These processes are achieved through cycles of ATP binding, ATP hydrolysis, and ADP release, mediated by co-chaperones. In mitochondria, it associates with the TIM (translocase of the inner membrane) protein complex to assist in the import and folding of mitochondrial proteins. Plays an important role in mitochondrial iron-sulfur cluster (ISC) biogenesis, interacts with and stabilizes ISC cluster assembly proteins FXN, NFU1, NFS1 and ISCU. Regulates erythropoiesis via stabilization of ISC assembly. Regulates mitochondrial calcium-dependent apoptosis by coupling two calcium channels, ITPR1 and VDAC1, at the mitochondria-associated endoplasmic reticulum (ER) membrane to facilitate calcium transport from the ER lumen to the mitochondria intermembrane space, providing calcium for the downstream calcium channel MCU, which releases it into the mitochondrial matrix. Although primarily located in the mitochondria, it is also found in other cellular compartments. In the cytosol, it associates with proteins involved in signaling, apoptosis, or senescence. It may play a role in cell cycle regulation via its interaction with and promotion of degradation of TP53. May play a role in the control of cell proliferation and cellular aging. Protects against reactive oxygen species (ROS). Extracellular HSPA9 plays a cytoprotective role by preventing cell lysis following immune attack by the membrane attack complex by disrupting formation of the complex. The chain is Stress-70 protein, mitochondrial from Pongo abelii (Sumatran orangutan).